A 503-amino-acid chain; its full sequence is Glycerol kinase (503 aa).

T14 contributes to the ADP binding site. Positions 14, 15, and 16 each coordinate ATP. A sn-glycerol 3-phosphate-binding site is contributed by T14. R18 provides a ligand contact to ADP. Sn-glycerol 3-phosphate is bound by residues R84, E85, Y136, and D246. The glycerol site is built by R84, E85, Y136, D246, and Q247. ADP contacts are provided by T268 and G311. T268, G311, Q315, and G412 together coordinate ATP. Positions 412 and 416 each coordinate ADP.

This sequence belongs to the FGGY kinase family. In terms of assembly, homotetramer and homodimer (in equilibrium). Heterodimer with EIIA-Glc. Binds 1 zinc ion per glycerol kinase EIIA-Glc dimer. The zinc ion is important for dimerization.

It carries out the reaction glycerol + ATP = sn-glycerol 3-phosphate + ADP + H(+). It functions in the pathway polyol metabolism; glycerol degradation via glycerol kinase pathway; sn-glycerol 3-phosphate from glycerol: step 1/1. Activity of this regulatory enzyme is affected by several metabolites. Allosterically and non-competitively inhibited by fructose 1,6-bisphosphate (FBP) and unphosphorylated phosphocarrier protein EIIA-Glc (III-Glc), an integral component of the bacterial phosphotransferase (PTS) system. Functionally, key enzyme in the regulation of glycerol uptake and metabolism. Catalyzes the phosphorylation of glycerol to yield sn-glycerol 3-phosphate. The polypeptide is Glycerol kinase (Klebsiella pneumoniae subsp. pneumoniae (strain ATCC 700721 / MGH 78578)).